A 552-amino-acid polypeptide reads, in one-letter code: ATP synthase subunit alpha, mitochondrial (552 aa).

The transit peptide at Met-1–Ser-47 directs the protein to the mitochondrion. Gly-211–Thr-218 contributes to the ATP binding site.

The protein belongs to the ATPase alpha/beta chains family. In terms of assembly, F-type ATPases have 2 components, CF(1) - the catalytic core - and CF(0) - the membrane proton channel. CF(1) has five subunits: alpha(3), beta(3), gamma(1), delta(1), epsilon(1). CF(0) has three main subunits: a, b and c.

The protein localises to the mitochondrion inner membrane. Its function is as follows. Mitochondrial membrane ATP synthase (F(1)F(0) ATP synthase or Complex V) produces ATP from ADP in the presence of a proton gradient across the membrane which is generated by electron transport complexes of the respiratory chain. F-type ATPases consist of two structural domains, F(1) - containing the extramembraneous catalytic core, and F(0) - containing the membrane proton channel, linked together by a central stalk and a peripheral stalk. During catalysis, ATP synthesis in the catalytic domain of F(1) is coupled via a rotary mechanism of the central stalk subunits to proton translocation. Subunits alpha and beta form the catalytic core in F(1). Rotation of the central stalk against the surrounding alpha(3)beta(3) subunits leads to hydrolysis of ATP in three separate catalytic sites on the beta subunits. Subunit alpha does not bear the catalytic high-affinity ATP-binding sites. In Drosophila melanogaster (Fruit fly), this protein is ATP synthase subunit alpha, mitochondrial (blw).